The following is a 413-amino-acid chain: S-adenosylmethionine synthase (413 aa).

Residue His-15 coordinates ATP. Asp-17 serves as a coordination point for Mg(2+). Glu-43 provides a ligand contact to K(+). Positions 56 and 100 each coordinate L-methionine. Positions 100 to 110 (QSPDISQGVNE) are flexible loop. Residues 171 to 173 (DGK), 248 to 249 (KF), Asp-257, 263 to 264 (RK), Ala-280, and Lys-284 contribute to the ATP site. Asp-257 provides a ligand contact to L-methionine. Lys-288 provides a ligand contact to L-methionine.

Belongs to the AdoMet synthase family. In terms of assembly, homotetramer; dimer of dimers. Mg(2+) serves as cofactor. The cofactor is K(+).

The protein resides in the cytoplasm. The catalysed reaction is L-methionine + ATP + H2O = S-adenosyl-L-methionine + phosphate + diphosphate. It participates in amino-acid biosynthesis; S-adenosyl-L-methionine biosynthesis; S-adenosyl-L-methionine from L-methionine: step 1/1. Catalyzes the formation of S-adenosylmethionine (AdoMet) from methionine and ATP. The overall synthetic reaction is composed of two sequential steps, AdoMet formation and the subsequent tripolyphosphate hydrolysis which occurs prior to release of AdoMet from the enzyme. This chain is S-adenosylmethionine synthase, found in Prochlorococcus marinus (strain MIT 9515).